The primary structure comprises 164 residues: Crossover junction endodeoxyribonuclease RuvC (164 aa).

Residues D7, E67, and D140 contribute to the active site. 3 residues coordinate Mg(2+): D7, E67, and D140.

Belongs to the RuvC family. Homodimer which binds Holliday junction (HJ) DNA. The HJ becomes 2-fold symmetrical on binding to RuvC with unstacked arms; it has a different conformation from HJ DNA in complex with RuvA. In the full resolvosome a probable DNA-RuvA(4)-RuvB(12)-RuvC(2) complex forms which resolves the HJ. It depends on Mg(2+) as a cofactor.

It is found in the cytoplasm. The catalysed reaction is Endonucleolytic cleavage at a junction such as a reciprocal single-stranded crossover between two homologous DNA duplexes (Holliday junction).. In terms of biological role, the RuvA-RuvB-RuvC complex processes Holliday junction (HJ) DNA during genetic recombination and DNA repair. Endonuclease that resolves HJ intermediates. Cleaves cruciform DNA by making single-stranded nicks across the HJ at symmetrical positions within the homologous arms, yielding a 5'-phosphate and a 3'-hydroxyl group; requires a central core of homology in the junction. The consensus cleavage sequence is 5'-(A/T)TT(C/G)-3'. Cleavage occurs on the 3'-side of the TT dinucleotide at the point of strand exchange. HJ branch migration catalyzed by RuvA-RuvB allows RuvC to scan DNA until it finds its consensus sequence, where it cleaves and resolves the cruciform DNA. The protein is Crossover junction endodeoxyribonuclease RuvC of Finegoldia magna (strain ATCC 29328 / DSM 20472 / WAL 2508) (Peptostreptococcus magnus).